We begin with the raw amino-acid sequence, 297 residues long: tRNA(Ile)-lysidine synthase (297 aa).

Position 16–21 (16–21 (SGGSDS)) interacts with ATP.

The protein belongs to the tRNA(Ile)-lysidine synthase family.

The protein localises to the cytoplasm. The catalysed reaction is cytidine(34) in tRNA(Ile2) + L-lysine + ATP = lysidine(34) in tRNA(Ile2) + AMP + diphosphate + H(+). Ligates lysine onto the cytidine present at position 34 of the AUA codon-specific tRNA(Ile) that contains the anticodon CAU, in an ATP-dependent manner. Cytidine is converted to lysidine, thus changing the amino acid specificity of the tRNA from methionine to isoleucine. The sequence is that of tRNA(Ile)-lysidine synthase from Mesomycoplasma hyopneumoniae (strain 232) (Mycoplasma hyopneumoniae).